The primary structure comprises 226 residues: ATP-dependent dethiobiotin synthetase BioD (226 aa).

12-17 (GVGKTV) contacts ATP. T16 provides a ligand contact to Mg(2+). Residue K37 is part of the active site. Residue T41 participates in substrate binding. Residues D49, 108–111 (EGAG), 169–170 (GS), and 197–199 (PAG) contribute to the ATP site. D49 and E108 together coordinate Mg(2+).

This sequence belongs to the dethiobiotin synthetase family. Homodimer. The cofactor is Mg(2+).

The protein resides in the cytoplasm. It catalyses the reaction (7R,8S)-7,8-diammoniononanoate + CO2 + ATP = (4R,5S)-dethiobiotin + ADP + phosphate + 3 H(+). Its pathway is cofactor biosynthesis; biotin biosynthesis; biotin from 7,8-diaminononanoate: step 1/2. Its function is as follows. Catalyzes a mechanistically unusual reaction, the ATP-dependent insertion of CO2 between the N7 and N8 nitrogen atoms of 7,8-diaminopelargonic acid (DAPA, also called 7,8-diammoniononanoate) to form a ureido ring. This chain is ATP-dependent dethiobiotin synthetase BioD, found in Mycobacterium tuberculosis (strain ATCC 25177 / H37Ra).